The chain runs to 557 residues: Inositol-3-phosphate synthase 1 (557 aa).

Residues glycine 67, glycine 68, asparagine 69, asparagine 70, aspartate 141, serine 177, valine 178, glutamine 188, arginine 191, threonine 228, alanine 229, asparagine 230, threonine 231, glycine 278, serine 279, aspartate 303, serine 306, asparagine 337, asparagine 338, aspartate 339, and lysine 352 each coordinate NAD(+). Serine 279 is subject to Phosphoserine. Serine 357 bears the Phosphoserine mark. The NAD(+) site is built by glycine 390, aspartate 391, aspartate 419, and serine 420. The interval 514 to 557 (GIKPEEVKATSPLPCKKESTPATNGCTGDANGHTQAPTPELSTA) is disordered. Serine 524 carries the post-translational modification Phosphoserine. A compositionally biased stretch (polar residues) spans 533–557 (TPATNGCTGDANGHTQAPTPELSTA).

The protein belongs to the myo-inositol 1-phosphate synthase family. As to quaternary structure, homotrimer. The cofactor is NAD(+). Phosphorylation at Ser-524 does not appear to affect enzyme activity, and is detected in brain and testis. As to expression, expressed in testis, brain and epididymis (at protein level). Moderately expressed in brain, lung, liver, and kidney. Low expression in heart and spleen. Very low expression in skeletal muscle. In terms of tissue distribution, expressed in testis, spleen, heart, brainstem, hippocampus, cerebellum, cortex and amygdala. Absent or very lowly expressed in intestine, lung and muscle. Expressed in intestine, lung, liver, muscle, testis, spleen, brainstem, hippocampus, cerebellum, cortex and amygdala. Absent or lowly expressed in heart and kidney. As to expression, expressed in intestine (at protein level).

The protein localises to the cytoplasm. It catalyses the reaction D-glucose 6-phosphate = 1D-myo-inositol 3-phosphate. It participates in polyol metabolism; myo-inositol biosynthesis; myo-inositol from D-glucose 6-phosphate: step 1/2. Inhibited by 2-deoxyglucitol 6-phosphate (dgtolP) and 2-deoxy-D-glucose 6-phosphate. Inhibited by copper, mercury, cadmium, zinc and copper ions. Activated by potassium and ammonium ions. Functionally, key enzyme in myo-inositol biosynthesis pathway that catalyzes the conversion of glucose 6-phosphate to 1-myo-inositol 1-phosphate in a NAD-dependent manner. Rate-limiting enzyme in the synthesis of all inositol-containing compounds. Key enzyme in myo-inositol biosynthesis pathway that catalyzes the conversion of glucose 6-phosphate to 1-myo-inositol 1-phosphate in a NAD-dependent manner. Its function is as follows. Competitively inhibits the function of isoform 1, presumably by competing for NAD cofactor. This is Inositol-3-phosphate synthase 1 (Isyna1) from Rattus norvegicus (Rat).